A 439-amino-acid polypeptide reads, in one-letter code: Ornithine aminotransferase, mitochondrial (439 aa).

Residues 1 to 25 (MLSKLASLQTIAALRRGVHTSVASA) constitute a mitochondrion transit peptide. An N6-acetyllysine mark is found at K49 and K66. At K102 the chain carries N6-succinyllysine. Residue K107 is modified to N6-acetyllysine; alternate. K107 carries the post-translational modification N6-succinyllysine; alternate. An N6-(pyridoxal phosphate)lysine modification is found at K292. An N6-acetyllysine; alternate modification is found at K362. K362 carries the post-translational modification N6-succinyllysine; alternate. N6-acetyllysine is present on residues K386 and K392. An N6-acetyllysine; alternate modification is found at K405. An N6-succinyllysine; alternate modification is found at K405. The residue at position 421 (K421) is an N6-acetyllysine.

Belongs to the class-III pyridoxal-phosphate-dependent aminotransferase family. Homohexamer. Pyridoxal 5'-phosphate serves as cofactor.

The protein resides in the mitochondrion matrix. The enzyme catalyses L-ornithine + 2-oxoglutarate = L-glutamate 5-semialdehyde + L-glutamate. It functions in the pathway amino-acid biosynthesis; L-proline biosynthesis; L-glutamate 5-semialdehyde from L-ornithine: step 1/1. Catalyzes the reversible interconversion of L-ornithine and 2-oxoglutarate to L-glutamate semialdehyde and L-glutamate. This chain is Ornithine aminotransferase, mitochondrial (Oat), found in Mus musculus (Mouse).